The chain runs to 565 residues: MSQLRWWVVSQLLLLIVVCILDHSEGARVCPKIVPGLDKLRVGVDITKLDLLPLFDLGDNGFRSAVADYTCDRGQTTVVDGESFDVPDQVDSVVIESSGQQTSSVTTIKSESQISQALSISAGISVDTAKAGFSSSASYAEMQEAITKYGRTVSQMSAVYTTCSANLSPNLLLGQNPLQTLSRLPSDFTADTEGYYDFIKTYGTHYFNKGKLGGMFLFTSETDMSYFQNKNSQQVEANIKATFASILSTETGGSSDQSKEVIEFKESSLITAKFFGGRTNLAADGLTKWQPTIAKLPYFMSGTLSTISSLIADTTKRASMELAVKNYLLKAKVANLDRLTYIRLNSWTVGHNELRDLSAQLQNLKKKTIFSDEDEKLLQSIEDQVSVPAWFSDRTTFCFRSTAVGSADQCNGQSTSTLCAEPNRYTQQYMDKTYLGDTGCRLVWKLSTTESSDWFKSVKVNFRWYPTWSPCACGPVGTPFTISAPANSWTQDYLDVTNPKFGECMLQWMIEVPPTATLWAKNLEFCIDFTCGKKKQCVDANHWTEPYLDISAHEACGMSWALIAK.

The signal sequence occupies residues 1–26; the sequence is MSQLRWWVVSQLLLLIVVCILDHSEG. An MACPF domain is found at 27–340; that stretch reads ARVCPKIVPG…AKVANLDRLT (314 aa).

As to quaternary structure, perivitellin-2 is a heterooctamer of 4 identical 98 kDa heterodimers, each composed of one 31 kDa and one 67 kDa subunits. The 98 kDa heterodimer subunits are held together by disulfide bridges while the heterodimers are assembled into the native perivitellin-2 octamer by non-covalent forces. In terms of processing, glycosylated. Contains four O-linked and one N-linked oligosaccharide bonds. The protein contains 2.5% of carbohydrates (high levels of mannose, galactose, and NAcGlucosamine, and small amounts of NacGalactosamine). Post-translationally, PV2 is a very high density lipoprotein (VHDL). It contains 3.75% of lipids. The major lipid classes are free sterols and phospholipids and also have significant quantities of energy-providing triacylglycerides and free fatty acids. As to expression, produced by albumen secretory cells. Found in developing eggs.

The protein localises to the secreted. It is found in the target cell membrane. Functionally, the egg defensive protein perivitellin-2 is a pore-forming two-subunit glycoprotein that affects both the nervous and digestive systems of mammals. In addition, it is a source of both structural and energetic molecules during embryonic development. The tachylectin subunit (31 kDa) binds target membranes while the MACPF subunit (67 kDa) disrupts lipid bilayers forming large pores altering the plasma membrance conductance. Both in vivo and in vitro, the protein shows wide pH range stability and is resistant to enzymatic proteolysis from gastrointestinal environments. It specifically binds mature enterocytes but does not cause cell disruption on caco-2 (human colorectal adenocarcinoma cells) or rat intestinal cells. After oral administration to mice, it binds enterocytes and induces large dose-dependent morphological changes on their small intestine mucosa, reducing the absorptive surface. Additionally, it is detected in the Peyer's patches where it activates lymphoid follicles and triggers apoptosis. The toxin can also traverse the intestinal barrier and induce oral adaptive immunity with evidence of circulating antibody response. The toxin also shows hemagglutination properties thanks to the tachylectin subunit, but does not show hemolytic activity. In addition to enterotoxin activity, the toxin also acts as a neurotoxin, since an intraperitoneal injection induces paralysis of the mice rear limbs, followed by death. This is Perivitellin-2 67 kDa subunit from Pomacea canaliculata (Golden apple snail).